The following is a 355-amino-acid chain: Guanine nucleotide-binding protein G(i) subunit alpha-2 (355 aa).

Residue Gly-2 is the site of N-myristoyl glycine attachment. A lipid anchor (S-palmitoyl cysteine) is attached at Cys-3. In terms of domain architecture, G-alpha spans 32 to 355; that stretch reads REVKLLLLGA…KNNLKDCGLF (324 aa). The interval 35–48 is G1 motif; it reads KLLLLGAGESGKST. Residues 40–47, 176–182, 201–205, 270–273, and Ala-327 contribute to the GTP site; these read GAGESGKS, LRTRVKT, DVGGQ, and NKKD. Ser-47 and Thr-182 together coordinate Mg(2+). The G2 motif stretch occupies residues 174–182; it reads DVLRTRVKT. The G3 motif stretch occupies residues 197 to 206; sequence FKMFDVGGQR. The segment at 266–273 is G4 motif; that stretch reads ILFLNKKD. The segment at 325 to 330 is G5 motif; the sequence is TCATDT.

It belongs to the G-alpha family. G(i/o/t/z) subfamily. G proteins are composed of 3 units; alpha, beta and gamma. The alpha chain contains the guanine nucleotide binding site. In this context, interacts with GNB2. Interacts with UNC5B. Interacts with GPSM1. Interacts with RGS12 and RGS14. Interacts (inactive GDP-bound form) with NUCB1 (via GBA motif); the interaction leads to activation of GNAI3. Interacts (inactive GDP-bound form) with CCDC88C/DAPLE (via GBA motif). Interacts (inactive GDP-bound form) with CCDC8A/GIV (via GBA motif). In terms of tissue distribution, ubiquitously expressed. Most abundant in the lung and in the spleen.

The protein resides in the cytoplasm. It localises to the cytoskeleton. The protein localises to the microtubule organizing center. Its subcellular location is the centrosome. It is found in the cell membrane. The protein resides in the membrane. Its function is as follows. Guanine nucleotide-binding proteins (G proteins) are involved as modulators or transducers in various transmembrane signaling systems. The G(i) proteins are involved in hormonal regulation of adenylate cyclase: they inhibit the cyclase in response to beta-adrenergic stimuli. May play a role in cell division. The chain is Guanine nucleotide-binding protein G(i) subunit alpha-2 (GNAI2) from Cavia porcellus (Guinea pig).